A 374-amino-acid polypeptide reads, in one-letter code: WAT1-related protein At1g60050 (374 aa).

The next 10 helical transmembrane spans lie at 11 to 31, 42 to 62, 82 to 102, 107 to 127, 145 to 165, 194 to 214, 228 to 248, 255 to 275, 292 to 312, and 315 to 335; these read IVPF…TILA, FVFI…YSFY, IFLL…LGLS, IVVC…SLAL, IGTL…GPFI, WALG…WNII, VVSA…AFME, ELKL…GSII, VPLF…SFFV, and LHYG…LIMW. Positions 26–155 constitute an EamA domain; it reads ALTILAKTAL…GTLICFTGAF (130 aa).

Belongs to the drug/metabolite transporter (DMT) superfamily. Plant drug/metabolite exporter (P-DME) (TC 2.A.7.4) family.

It is found in the membrane. The chain is WAT1-related protein At1g60050 from Arabidopsis thaliana (Mouse-ear cress).